A 136-amino-acid chain; its full sequence is Protein LITTLE ZIPPER 1 (136 aa).

The stretch at 97 to 122 forms a coiled coil; sequence ENQNIIRENEKLKKKALLLHQENKTL.

In terms of assembly, interacts with REV. As to expression, expressed in the adaxial epidermis of the cotyledons and in the vascular cylinder of wild-type torpedo stage embryos.

In terms of biological role, competitive inhibitor of the HD-ZIPIII transcription factors in shoot apical meristem (SAM) development. Acts by forming non-functional heterodimers. Part of a negative feedback loop. Essential for proper functioning of stem cells in the SAM. The chain is Protein LITTLE ZIPPER 1 from Arabidopsis thaliana (Mouse-ear cress).